The following is a 354-amino-acid chain: tRNA N6-adenosine threonylcarbamoyltransferase (354 aa).

Fe cation-binding residues include H111 and H115. Residues 134-138, D167, G180, and N279 each bind substrate; that span reads LVSGG. Position 319 (D319) interacts with Fe cation.

Belongs to the KAE1 / TsaD family. Fe(2+) serves as cofactor.

The protein localises to the cytoplasm. It carries out the reaction L-threonylcarbamoyladenylate + adenosine(37) in tRNA = N(6)-L-threonylcarbamoyladenosine(37) in tRNA + AMP + H(+). Functionally, required for the formation of a threonylcarbamoyl group on adenosine at position 37 (t(6)A37) in tRNAs that read codons beginning with adenine. Is involved in the transfer of the threonylcarbamoyl moiety of threonylcarbamoyl-AMP (TC-AMP) to the N6 group of A37, together with TsaE and TsaB. TsaD likely plays a direct catalytic role in this reaction. This chain is tRNA N6-adenosine threonylcarbamoyltransferase, found in Neisseria meningitidis serogroup A / serotype 4A (strain DSM 15465 / Z2491).